Here is a 391-residue protein sequence, read N- to C-terminus: Ferrochelatase (391 aa).

Fe cation-binding residues include histidine 196 and glutamate 281.

It belongs to the ferrochelatase family.

The protein resides in the cytoplasm. The catalysed reaction is heme b + 2 H(+) = protoporphyrin IX + Fe(2+). It functions in the pathway porphyrin-containing compound metabolism; protoheme biosynthesis; protoheme from protoporphyrin-IX: step 1/1. Functionally, catalyzes the ferrous insertion into protoporphyrin IX. The chain is Ferrochelatase from Synechococcus sp. (strain CC9605).